The primary structure comprises 136 residues: DNA-directed RNA polymerase subunit omega (136 aa).

It belongs to the RNA polymerase subunit omega family. The RNAP catalytic core consists of 2 alpha, 1 beta, 1 beta' and 1 omega subunit. When a sigma factor is associated with the core the holoenzyme is formed, which can initiate transcription.

It carries out the reaction RNA(n) + a ribonucleoside 5'-triphosphate = RNA(n+1) + diphosphate. In terms of biological role, promotes RNA polymerase assembly. Latches the N- and C-terminal regions of the beta' subunit thereby facilitating its interaction with the beta and alpha subunits. This is DNA-directed RNA polymerase subunit omega from Methylorubrum extorquens (strain CM4 / NCIMB 13688) (Methylobacterium extorquens).